The following is a 443-amino-acid chain: Chromosomal replication initiator protein DnaA (443 aa).

The segment at 1 to 67 (MDAWSRSLER…RELLAHFAGF (67 aa)) is domain I, interacts with DnaA modulators. Positions 67–105 (FSDVFLEIGSRPRPVEAQNAPVSTPSAHVSSEPQVPFAG) are domain II. The segment at 106–323 (NLDNHYTFAN…GALNTLTARA (218 aa)) is domain III, AAA+ region. Residues Gly151, Gly153, Lys154, and Thr155 each coordinate ATP. The segment at 324–443 (NFTGRAITTE…WDKLIRKLSE (120 aa)) is domain IV, binds dsDNA.

This sequence belongs to the DnaA family. As to quaternary structure, oligomerizes as a right-handed, spiral filament on DNA at oriC.

It localises to the cytoplasm. Its function is as follows. Plays an essential role in the initiation and regulation of chromosomal replication. ATP-DnaA binds to the origin of replication (oriC) to initiate formation of the DNA replication initiation complex once per cell cycle. Binds the DnaA box (a 9 base pair repeat at the origin) and separates the double-stranded (ds)DNA. Forms a right-handed helical filament on oriC DNA; dsDNA binds to the exterior of the filament while single-stranded (ss)DNA is stabiized in the filament's interior. The ATP-DnaA-oriC complex binds and stabilizes one strand of the AT-rich DNA unwinding element (DUE), permitting loading of DNA polymerase. After initiation quickly degrades to an ADP-DnaA complex that is not apt for DNA replication. Binds acidic phospholipids. This Stenotrophomonas maltophilia (strain K279a) protein is Chromosomal replication initiator protein DnaA.